The sequence spans 313 residues: Peroxidase 57 (313 aa).

The first 22 residues, 1–22 (MMKGAKFSSLLVLFFIFPIAFA), serve as a signal peptide directing secretion. Disulfide bonds link Cys33–Cys109, Cys66–Cys71, Cys115–Cys309, and Cys192–Cys224. The active-site Proton acceptor is His64. The Ca(2+) site is built by Asp65, Val68, Gly70, Asp72, and Ser74. Pro155 is a binding site for substrate. His185 serves as a coordination point for heme b. A Ca(2+)-binding site is contributed by Thr186. Ca(2+) is bound by residues Asp233, Ser236, and Asp241.

The protein belongs to the peroxidase family. Classical plant (class III) peroxidase subfamily. The cofactor is heme b. Requires Ca(2+) as cofactor. In terms of tissue distribution, mainly expressed in roots.

The protein resides in the secreted. It catalyses the reaction 2 a phenolic donor + H2O2 = 2 a phenolic radical donor + 2 H2O. Its function is as follows. Removal of H(2)O(2), oxidation of toxic reductants, biosynthesis and degradation of lignin, suberization, auxin catabolism, response to environmental stresses such as wounding, pathogen attack and oxidative stress. These functions might be dependent on each isozyme/isoform in each plant tissue. The protein is Peroxidase 57 (PER57) of Arabidopsis thaliana (Mouse-ear cress).